The following is a 66-amino-acid chain: Prokaryotic ubiquitin-like protein UBact (66 aa).

The disordered stretch occupies residues 1–66; sequence MNMRYTLMPE…AERYRQRTGE (66 aa). The segment covering 30-66 has biased composition (basic and acidic residues); it reads GGPRRPETGSPDKDNLLKRMRKVDPKQAERYRQRTGE. Residue E66 forms an Isoglutamyl lysine isopeptide (Glu-Lys) (interchain with K-? in acceptor proteins) linkage.

Belongs to the ubiquitin-like protein UBact family.

Functionally, may function as a protein modifier covalently attached to lysine residues of substrate proteins. This may serve to target the modified proteins for degradation by proteasomes. This Nitrospira moscoviensis protein is Prokaryotic ubiquitin-like protein UBact.